We begin with the raw amino-acid sequence, 156 residues long: Movement protein P17 (156 aa).

The homodimerization stretch occupies residues 38-54 (AEDVEEEAIAAQEELEF). The RNA-binding stretch occupies residues 57–156 (DEAQARHSCL…RAAPKLIKRG (100 aa)). 4 positions are modified to phosphoserine: serine 71, serine 79, serine 137, and serine 140. The tract at residues 106–156 (ASYFSSSARPLPPPPAPSLMSWTPIAKYHPSSPTSTSSKLRRAAPKLIKRG) is disordered. The segment covering 144–156 (KLRRAAPKLIKRG) has biased composition (basic residues).

This sequence belongs to the polerovirus movement protein family. Homodimer. In terms of processing, expressed as a nonphosphorylated 20kDa form and a phosphorylated 22kDa form. Phosphorylated by a host PKC-related kinase. Serine phosphorylation is required for plamodesma targeting.

It localises to the host cell junction. The protein localises to the host plasmodesma. The protein resides in the host chloroplast envelope. It is found in the host Golgi apparatus. Its subcellular location is the host mitochondrion outer membrane. In terms of biological role, together with movement protein P3a, facilitates long-distance movement of virions in host. Transports viral genome to neighboring plant cells directly through plasmosdesmata, without any budding. The movement protein allows efficient cell to cell propagation, by bypassing the host cell wall barrier. Binds ssRNA. This chain is Movement protein P17, found in Solanum tuberosum (Potato).